Reading from the N-terminus, the 91-residue chain is Acylphosphatase (91 aa).

Residues 5-91 (WKKWNVRGVV…QEYKDFHVEF (87 aa)) form the Acylphosphatase-like domain. Residues arginine 20 and asparagine 38 contribute to the active site.

It belongs to the acylphosphatase family.

It catalyses the reaction an acyl phosphate + H2O = a carboxylate + phosphate + H(+). In Fervidobacterium nodosum (strain ATCC 35602 / DSM 5306 / Rt17-B1), this protein is Acylphosphatase (acyP).